A 444-amino-acid polypeptide reads, in one-letter code: Glutamyl-tRNA reductase (444 aa).

Substrate is bound by residues 49–52 (TCNR), serine 109, 114–116 (ETQ), and glutamine 120. Cysteine 50 (nucleophile) is an active-site residue. NADP(+) is bound at residue 189 to 194 (GAGKMS). Positions 425-444 (KPKKQPAPAGIKEPVLAKKG) are disordered.

It belongs to the glutamyl-tRNA reductase family. In terms of assembly, homodimer.

The catalysed reaction is (S)-4-amino-5-oxopentanoate + tRNA(Glu) + NADP(+) = L-glutamyl-tRNA(Glu) + NADPH + H(+). It participates in porphyrin-containing compound metabolism; protoporphyrin-IX biosynthesis; 5-aminolevulinate from L-glutamyl-tRNA(Glu): step 1/2. In terms of biological role, catalyzes the NADPH-dependent reduction of glutamyl-tRNA(Glu) to glutamate 1-semialdehyde (GSA). The protein is Glutamyl-tRNA reductase of Pelotomaculum thermopropionicum (strain DSM 13744 / JCM 10971 / SI).